Reading from the N-terminus, the 646-residue chain is RNA-binding protein RMD9, mitochondrial (646 aa).

The transit peptide at 1–14 directs the protein to the mitochondrion; it reads MMLRRNAVRSLKTM. Residues 15–51 constitute a propeptide, removed in mature form; that stretch reads EISVSNVVNSGSIAMLRGKLANVVLSDRTYHSSPIFH. A PPR1 repeat occupies 209-238; the sequence is VSGYGATHLLTSFKELSFDDDCIRIWEASK. One copy of the PPR2 repeat lies at 251 to 282; sequence EPKVVGFMLPLLYAKTRSLTEPNELYNQIIQS. The PPR3 repeat unit spans residues 288 to 317; the sequence is PNLYSGLIKVFIKAEDYEKALSLFGQLCEK. One copy of the PPR4 repeat lies at 323 to 353; sequence YGYLIETHLSFIGDSKNLTLAESFFDKIIND. The PPR5 repeat unit spans residues 363 to 394; it reads VSTVNSFLQNIWKAQNDFDHVYRIWEKAVKFY. One copy of the PPR6 repeat lies at 401-439; sequence GILSSLNNTFFTIFFENYINDNINGFRKLQEIITFYSGV. A PPR7 repeat occupies 444 to 473; sequence EPFFNVMLTRASIWHERSIIDFIDKNYTLY. One copy of the PPR8 repeat lies at 481-514; sequence SYRILLKSLGSIDNTNNEEILDRWLELVKKLNEL.

The protein belongs to the RMD9 family. In terms of assembly, monomer. In terms of processing, phosphorylated. Phosphorylation promotes binding to RNA.

The protein localises to the mitochondrion inner membrane. Its function is as follows. Binds the RNA motif 5'-AAUAA[U/C]AUUCUU-3' in the 3'-UTR of mitochondrial mRNAs. Involved in the processing or stability of mitochondrial mRNAs. The sequence is that of RNA-binding protein RMD9, mitochondrial from Saccharomyces cerevisiae (strain ATCC 204508 / S288c) (Baker's yeast).